Reading from the N-terminus, the 1987-residue chain is Transcriptional activator DEMETER (1987 aa).

Disordered stretches follow at residues 246 to 378 (TGHE…NKSP), 392 to 415 (DLENPGDARQGDSESEIVQNSSGA), and 793 to 901 (MPPE…GPSG). Positions 258–277 (SMQSIMDSSAVNATEATEQN) are enriched in polar residues. The span at 341 to 364 (ATQEKVKSKETGSAKKKNLKESAT) shows a compositional bias: basic and acidic residues. Positions 813–829 (NTASISKGASKGNSSPV) are enriched in polar residues. Over residues 844–855 (PAKKGRAGRKKS) the composition is skewed to basic residues. Residues 955–1054 (KVDIDDETTR…AFMSLAARFP (100 aa)) form a DEMETER region. Disordered stretches follow at residues 1324-1351 (LPGMGLSGSSSAVQEHQDDTQHNQQDEM) and 1439-1471 (TLADGKKPTSQWDSLRKDVEGNEGRQERNKNNM). Composition is skewed to basic and acidic residues over residues 1338–1351 (EHQDDTQHNQQDEM) and 1452–1469 (SLRKDVEGNEGRQERNKN). [4Fe-4S] cluster-binding residues include Cys-1629, Cys-1636, Cys-1639, and Cys-1645.

The protein belongs to the DNA glycosylase family. DEMETER subfamily. [4Fe-4S] cluster serves as cofactor. Mainly expressed in immature flower buds, then decreases as the flower matures. Expressed in the ovule carpels, but not expressed in pollen stamens. Expressed in developing and mature ovules (stages 12-14), then strongly decreases after fertilization.

The protein localises to the nucleus. Functionally, transcriptional activator involved in gene imprinting. Catalyzes the release of 5-methylcytosine (5-meC) from DNA by a glycosylase/lyase mechanism. Allows the expression of the maternal copy of the imprinted MEA gene before fertilization, possibly by antagonizing or suppressing DNA methylation on target promoter. Probably acts by nicking the MEA promoter. Required for stable reproducible patterns of floral and vegetative development. In Arabidopsis thaliana (Mouse-ear cress), this protein is Transcriptional activator DEMETER (DME).